Here is a 404-residue protein sequence, read N- to C-terminus: Cysteine desulfurase IscS (404 aa).

Pyridoxal 5'-phosphate-binding positions include 75–76, Asn-155, Gln-183, and 203–205; these read AT and SAH. Lys-206 carries the N6-(pyridoxal phosphate)lysine modification. Thr-243 is a pyridoxal 5'-phosphate binding site. The active-site Cysteine persulfide intermediate is Cys-328. Cys-328 is a [2Fe-2S] cluster binding site.

The protein belongs to the class-V pyridoxal-phosphate-dependent aminotransferase family. NifS/IscS subfamily. As to quaternary structure, homodimer. Forms a heterotetramer with IscU, interacts with other sulfur acceptors. It depends on pyridoxal 5'-phosphate as a cofactor.

Its subcellular location is the cytoplasm. It catalyses the reaction (sulfur carrier)-H + L-cysteine = (sulfur carrier)-SH + L-alanine. It participates in cofactor biosynthesis; iron-sulfur cluster biosynthesis. In terms of biological role, master enzyme that delivers sulfur to a number of partners involved in Fe-S cluster assembly, tRNA modification or cofactor biosynthesis. Catalyzes the removal of elemental sulfur atoms from cysteine to produce alanine. Functions as a sulfur delivery protein for Fe-S cluster synthesis onto IscU, an Fe-S scaffold assembly protein, as well as other S acceptor proteins. In Vibrio cholerae serotype O1 (strain M66-2), this protein is Cysteine desulfurase IscS.